Reading from the N-terminus, the 352-residue chain is Aspartic protease Bla g 2 (352 aa).

An N-terminal signal peptide occupies residues 1–19 (MIGLKLVTVLFAVATITHA). Residues 20-24 (AELQR) constitute a propeptide, removed in mature form. A Peptidase A1 domain is found at 39 to 346 (YAGITKIGNQ…NWENKTMGFG (308 aa)). Asp55 is an active-site residue. 3 disulfides stabilise this stretch: Cys59/Cys151, Cys68/Cys73, and Cys75/Cys136. A glycan (N-linked (GlcNAc...) asparagine) is linked at Asn117. His178 and His186 together coordinate Zn(2+). Residue Asp239 is part of the active site. 2 disulfides stabilise this stretch: Cys261–Cys272 and Cys276–Cys309. N-linked (GlcNAc...) asparagine glycosylation occurs at Asn295. Asp326 and Asp330 together coordinate Zn(2+). Asn340 carries an N-linked (GlcNAc...) asparagine glycan.

Belongs to the peptidase A1 family. As to quaternary structure, homodimer.

In terms of biological role, functions as a digestive enzyme in the cockroach. In Blattella germanica (German cockroach), this protein is Aspartic protease Bla g 2.